A 345-amino-acid chain; its full sequence is Cell division control protein 2 homolog 2 (345 aa).

Residues 1 to 44 (MQVQVQEGQTACDGSLRPLPSAGPASFVPRSLRPAPLRGTSTPD) are disordered. One can recognise a Protein kinase domain in the interval 46-328 (YSRIEKVGEG…AYEALQHSYF (283 aa)). ATP-binding positions include 52-60 (VGEGSYGIV) and lysine 75. Residue serine 56 is modified to Phosphoserine. Tyrosine 57 bears the Phosphotyrosine mark. Aspartate 168 acts as the Proton acceptor in catalysis.

This sequence belongs to the protein kinase superfamily. CMGC Ser/Thr protein kinase family. CDC2/CDKX subfamily. In terms of assembly, forms a stable but non-covalent complex with a regulatory subunit and with a cyclin.

It carries out the reaction L-seryl-[protein] + ATP = O-phospho-L-seryl-[protein] + ADP + H(+). It catalyses the reaction L-threonyl-[protein] + ATP = O-phospho-L-threonyl-[protein] + ADP + H(+). With respect to regulation, phosphorylation at Ser-56 or Tyr-57 inactivates the enzyme. In terms of biological role, probably involved in the control of the cell cycle. The chain is Cell division control protein 2 homolog 2 (CRK2) from Trypanosoma brucei brucei.